The sequence spans 248 residues: 2,3-bisphosphoglycerate-dependent phosphoglycerate mutase (248 aa).

Substrate is bound by residues 8–15, 21–22, Arg60, 87–90, Lys98, 114–115, and 183–184; these read RHGESEWN, TG, ERHY, RR, and GN. His9 functions as the Tele-phosphohistidine intermediate in the catalytic mechanism. Glu87 acts as the Proton donor/acceptor in catalysis.

This sequence belongs to the phosphoglycerate mutase family. BPG-dependent PGAM subfamily.

The catalysed reaction is (2R)-2-phosphoglycerate = (2R)-3-phosphoglycerate. It participates in carbohydrate degradation; glycolysis; pyruvate from D-glyceraldehyde 3-phosphate: step 3/5. Catalyzes the interconversion of 2-phosphoglycerate and 3-phosphoglycerate. This is 2,3-bisphosphoglycerate-dependent phosphoglycerate mutase from Borrelia hermsii (strain HS1 / DAH).